Here is an 874-residue protein sequence, read N- to C-terminus: Valine--tRNA ligase (874 aa).

The span at 1-10 (MTENSQQQPP) shows a compositional bias: polar residues. Residues 1–23 (MTENSQQQPPASEPELPTQYAPA) form a disordered region. A 'HIGH' region motif is present at residues 57–67 (PNVTGSLHLGH). The short motif at 531–535 (KMSKS) is the 'KMSKS' region element. Position 534 (Lys534) interacts with ATP. Residues 806 to 871 (IDIVAERKRL…ARIQAQLDRM (66 aa)) are a coiled coil.

The protein belongs to the class-I aminoacyl-tRNA synthetase family. ValS type 1 subfamily. As to quaternary structure, monomer.

The protein localises to the cytoplasm. The catalysed reaction is tRNA(Val) + L-valine + ATP = L-valyl-tRNA(Val) + AMP + diphosphate. Its function is as follows. Catalyzes the attachment of valine to tRNA(Val). As ValRS can inadvertently accommodate and process structurally similar amino acids such as threonine, to avoid such errors, it has a 'posttransfer' editing activity that hydrolyzes mischarged Thr-tRNA(Val) in a tRNA-dependent manner. This is Valine--tRNA ligase from Streptomyces avermitilis (strain ATCC 31267 / DSM 46492 / JCM 5070 / NBRC 14893 / NCIMB 12804 / NRRL 8165 / MA-4680).